A 334-amino-acid polypeptide reads, in one-letter code: N-acetyl-gamma-glutamyl-phosphate reductase (334 aa).

Cys-154 is a catalytic residue.

It belongs to the NAGSA dehydrogenase family. Type 1 subfamily.

It localises to the cytoplasm. It carries out the reaction N-acetyl-L-glutamate 5-semialdehyde + phosphate + NADP(+) = N-acetyl-L-glutamyl 5-phosphate + NADPH + H(+). It functions in the pathway amino-acid biosynthesis; L-arginine biosynthesis; N(2)-acetyl-L-ornithine from L-glutamate: step 3/4. Catalyzes the NADPH-dependent reduction of N-acetyl-5-glutamyl phosphate to yield N-acetyl-L-glutamate 5-semialdehyde. The polypeptide is N-acetyl-gamma-glutamyl-phosphate reductase (Vibrio parahaemolyticus serotype O3:K6 (strain RIMD 2210633)).